The following is a 653-amino-acid chain: Calpain-10 (653 aa).

The region spanning Leu13–Ile321 is the Calpain catalytic domain. Catalysis depends on residues Cys73, His238, and Asn263. Domain III stretches follow at residues Thr322–Ser494 and Glu513–Gln653.

It belongs to the peptidase C2 family.

Calcium-regulated non-lysosomal thiol-protease which catalyzes limited proteolysis of substrates involved in cytoskeletal remodeling and signal transduction. May play a role in insulin-stimulated glucose uptake. The sequence is that of Calpain-10 (CAPN10) from Macaca fascicularis (Crab-eating macaque).